A 145-amino-acid polypeptide reads, in one-letter code: Basic phospholipase A2 cL038 (145 aa).

The first 21 residues, 1-21 (MYPAHLLVLLAVCVSLLGASA), serve as a signal peptide directing secretion. A propeptide spanning residues 22–27 (IPPLPL) is cleaved from the precursor. Disulfide bonds link Cys38/Cys98, Cys54/Cys144, Cys56/Cys72, Cys71/Cys125, Cys78/Cys118, Cys87/Cys111, and Cys105/Cys116. Ca(2+)-binding residues include Tyr55, Gly57, and Gly59. His75 is a catalytic residue. Asp76 serves as a coordination point for Ca(2+). Residue Asp119 is part of the active site.

Belongs to the phospholipase A2 family. Group I subfamily. D49 sub-subfamily. The cofactor is Ca(2+). As to expression, expressed by the venom gland.

It is found in the secreted. It carries out the reaction a 1,2-diacyl-sn-glycero-3-phosphocholine + H2O = a 1-acyl-sn-glycero-3-phosphocholine + a fatty acid + H(+). Its function is as follows. PLA2 catalyzes the calcium-dependent hydrolysis of the 2-acyl groups in 3-sn-phosphoglycerides. This chain is Basic phospholipase A2 cL038, found in Laticauda semifasciata (Black-banded sea krait).